The following is a 129-amino-acid chain: Vacuolar transporter chaperone complex subunit 1 (129 aa).

The residue at position 2 (S2) is an N-acetylserine. Over 2-32 (SSAPLLQRTPGKKIALPTRVEPKVFFANERT) the chain is Cytoplasmic. The helical transmembrane segment at 33–53 (FLSWLNFTVMLGGLGVGLLNF) threads the bilayer. Over 54-59 (GDKIGR) the chain is Vacuolar. Residues 60-80 (VSAGLFTFVAMGTMIYALVTY) traverse the membrane as a helical segment. Over 81–98 (HWRAAAIRRRGSGPYDDR) the chain is Cytoplasmic. The helical transmembrane segment at 99 to 119 (LGPTLLCFFLLVAVIINFILR) threads the bilayer. Topologically, residues 120 to 129 (LKYNDANTKL) are vacuolar.

It belongs to the VTC1 family. The VTC core complex is an integral membrane heterooligomer composed of the catalytic subunit VTC4 and the accessory subunits VTC1, VTC2 and VTC3. The complex exists in 2 different sub-complexes: VTC1-VTC2-VCT4 and VCT1-VTC3-VTC4. The VCT1-VTC3-VTC4 subcomplex is mostly found on the vacuolar membrane. The VTC1-VTC2-VCT4 subcomplex is observed in the cell periphery, probably ER and nuclear envelope, but localizes to the vacuole under phosphate starvation. Each subunit contains 3 transmembrane helices. VTC1 is a small membrane protein without hydrophilic domain. VTC2, VTC3 and VTC4 are related and have 2 hydrophilic domains that face the cytosol, an N-terminal SPX domain and the central core domain. The central core in VTC4 is the catalytic domain, with the essential catalytic lysine replaced by isoleucine and leucine in VTC2 and VTC3, respectively. The core complex associates with the accessory subunit VTC5. The complex interacts with the v-SNARE NYV1 and with the V(0) subunit of V-ATPase VPH1.

The protein resides in the vacuole membrane. It localises to the cytoplasm. The protein localises to the cell cortex. It is found in the endoplasmic reticulum membrane. Its subcellular location is the cytoplasmic vesicle. The protein resides in the autophagosome membrane. In terms of biological role, accessory subunit of the vacuolar transporter chaperone (VTC) complex. The VTC complex acts as a vacuolar polyphosphate polymerase that catalyzes the synthesis of inorganic polyphosphate (polyP) via transfer of phosphate from ATP to a growing polyP chain, releasing ADP. VTC exposes its catalytic domain VTC4 to the cytosol, where the growing polyP chain winds through a tunnel-shaped pocket, integrating cytoplasmic polymer synthesis with polyP membrane translocation. The VTC complex carries 9 vacuolar transmembrane domains, which are likely to constitute the translocation channel into the organelle lumen. PolyP synthesis is tightly coupled to its transport into the vacuole lumen, in order to avoid otherwise toxic intermediates in the cytosol, and it depends on the proton gradient across the membrane, formed by V-ATPase. VTC1 contributes only 3 transmembrane domains to the complex. The VTC complex also plays a role in vacuolar membrane fusion. Required for SEC18/NSF activity in SNARE priming, membrane binding of LMA1 and V(0) trans-complex formation. The chain is Vacuolar transporter chaperone complex subunit 1 from Saccharomyces cerevisiae (strain ATCC 204508 / S288c) (Baker's yeast).